The sequence spans 203 residues: Sarcosine oxidase subunit gamma (203 aa).

It belongs to the SoxG family. In terms of assembly, heterotetramer composed of subunits alpha (SoxA), beta (SoxB), gamma (SoxG) and delta (SoxD).

It is found in the cytoplasm. The catalysed reaction is sarcosine + (6S)-5,6,7,8-tetrahydrofolate + O2 = (6R)-5,10-methylene-5,6,7,8-tetrahydrofolate + glycine + H2O2. It catalyses the reaction sarcosine + O2 + H2O = formaldehyde + glycine + H2O2. Its function is as follows. In the presence of tetrahydrofolate, catalyzes the oxidative demethylation of sarcosine to yield glycine, 5,10-methylenetetrahydrofolate and hydrogen peroxide. In the absence of tetrahydrofolate, catalyzes the oxidative demethylation of sarcosine to yield glycine, formaldehyde and hydrogen peroxide. This Arthrobacter sp protein is Sarcosine oxidase subunit gamma (soxG).